The following is a 380-amino-acid chain: Proline iminopeptidase (380 aa).

Positions 98–360 (PVVFLHGGPG…IVYDAGHSAN (263 aa)) constitute an AB hydrolase-1 domain. The active-site Nucleophile is the Ser172. Residue Asp329 is part of the active site. His357 functions as the Proton donor in the catalytic mechanism.

This sequence belongs to the peptidase S33 family.

The protein resides in the cytoplasm. It catalyses the reaction Release of N-terminal proline from a peptide.. Specifically catalyzes the removal of N-terminal proline residues from peptides. The sequence is that of Proline iminopeptidase (PIP) from Arabidopsis thaliana (Mouse-ear cress).